Reading from the N-terminus, the 1067-residue chain is MSRRKQAKPQHINWEEGQGEQPQQLPSPDLAEALAAEEPGAPVNSPGNCDEASEDSIPVKRPRREDTHICNKCCAEFFSLSEFMEHKKSCTKTPPVLIMNDSEGPVPSEDFSRAALSHQLGSPSNKDSLQENGSSSGDLKKLGTDSILYLKTEATQPSTPQDISYLPKGKVANTNVTLQALRGTKVAVNQRGAEAPMAPMPAAQGIPWVLEQILCLQQQQLQQIQLTEQIRVQVNMWAAHALHSGVAGADTLKALSSHVSQQVSVSQQVSAAVALLSQKASNPALSLDALKQAKLPHASVPSAASPLSSGLTSFTLKPDGTRVLPNFVSRLPSALLPQTPGSVLLQSPFSAVTLDQSKKGKGKPQNLSASASVLDVKAKDEVVLGKHKCRYCPKVFGTDSSLQIHLRSHTGERPYVCPICGHRFTTKGNLKVHLQRHPEVKANPQLLAEFQDKGAVSAASHYALPVPVPADESSLSVDAEPVPVTGTPSLGLPQKLTSGPNSRDLMGGSLPNDMQPGPSPESEAGLPLLGVGMIHNPPKAGGFQGTGAPESGSETLKLQQLVENIDKATTDPNECLICHRVLSCQSSLKMHYRTHTGERPFQCKICGRAFSTKGNLKTHLGVHRTNTTVKTQHSCPICQKKFTNAVMLQQHIRMHMGGQIPNTPLPESPCDFTAPEPVAVSENGSASGVCQDDAAEGMEAEEVCSQDVPSGPSTVSLPVPSAHLASPSLGFSVLASLDTQGKGALPALALQRQSSRENSSLEGGDTGPANDSSLLVGDQECQSRSPDATETMCYQAVSPANSQAGSVKSRSPEGHKAEGVESCRVDTEGRTSLPPTFIRAQPTFVKVEVPGTFVGPPSMPSGMPPLLASQPQPRRQAKQHCCTRCGKNFSSASALQIHERTHTGEKPFVCNICGRAFTTKGNLKVHYMTHGANNNSARRGRKLAIENPMAALSAEGKRAPEVFSKELLSPAVSVDPASWNQYTSVLNGGLAMKTNEISVIQSGGIPTLPVSLGASSVVSNGTISKLDGSQTGVSMPMSGNGEKLAVPDGMAKHQFPHFLEENKIAVS.

Residues 1-62 form a disordered region; it reads MSRRKQAKPQ…SEDSIPVKRP (62 aa). Residues 15–42 are compositionally biased toward low complexity; the sequence is EEGQGEQPQQLPSPDLAEALAAEEPGAP. Ser-53 bears the Phosphoserine mark. The segment at 68–90 adopts a C2H2-type 1; atypical zinc-finger fold; sequence HICNKCCAEFFSLSEFMEHKKSC. The tract at residues 115-140 is disordered; sequence ALSHQLGSPSNKDSLQENGSSSGDLK. A compositionally biased stretch (polar residues) spans 119–137; sequence QLGSPSNKDSLQENGSSSG. Residue Lys-151 forms a Glycyl lysine isopeptide (Lys-Gly) (interchain with G-Cter in SUMO1); alternate linkage. Residue Lys-151 forms a Glycyl lysine isopeptide (Lys-Gly) (interchain with G-Cter in SUMO2); alternate linkage. Residues Lys-170, Lys-185, and Lys-291 each participate in a glycyl lysine isopeptide (Lys-Gly) (interchain with G-Cter in SUMO2) cross-link. Ser-308 is modified (phosphoserine). Lys-317 participates in a covalent cross-link: Glycyl lysine isopeptide (Lys-Gly) (interchain with G-Cter in SUMO1); alternate. Residue Lys-317 forms a Glycyl lysine isopeptide (Lys-Gly) (interchain with G-Cter in SUMO2); alternate linkage. A Glycyl lysine isopeptide (Lys-Gly) (interchain with G-Cter in SUMO2) cross-link involves residue Lys-377. Lys-379 is covalently cross-linked (Glycyl lysine isopeptide (Lys-Gly) (interchain with G-Cter in SUMO1); alternate). A Glycyl lysine isopeptide (Lys-Gly) (interchain with G-Cter in SUMO2); alternate cross-link involves residue Lys-379. 2 consecutive C2H2-type zinc fingers follow at residues 387-409 and 415-437; these read HKCR…LRSH and YVCP…LQRH. Residue Lys-441 forms a Glycyl lysine isopeptide (Lys-Gly) (interchain with G-Cter in SUMO2) linkage. The interval 471–521 is disordered; that stretch reads DESSLSVDAEPVPVTGTPSLGLPQKLTSGPNSRDLMGGSLPNDMQPGPSPE. Lys-557 participates in a covalent cross-link: Glycyl lysine isopeptide (Lys-Gly) (interchain with G-Cter in SUMO2). 2 consecutive C2H2-type zinc fingers follow at residues 573–595 and 601–623; these read NECL…YRTH and FQCK…LGVH. Glycyl lysine isopeptide (Lys-Gly) (interchain with G-Cter in SUMO2) cross-links involve residues Lys-604 and Lys-630. The C2H2-type 6 zinc-finger motif lies at 633-655; that stretch reads HSCPICQKKFTNAVMLQQHIRMH. 2 disordered regions span residues 682-716 and 752-835; these read ENGS…STVS and RQSS…SLPP. The segment covering 693-704 has biased composition (acidic residues); that stretch reads DAAEGMEAEEVC. Polar residues-rich tracts occupy residues 707 to 716 and 752 to 761; these read DVPSGPSTVS and RQSSRENSSL. Phosphoserine occurs at positions 785 and 798. Residues 798 to 809 show a composition bias toward polar residues; it reads SPANSQAGSVKS. Basic and acidic residues predominate over residues 810-829; it reads RSPEGHKAEGVESCRVDTEG. Residue Lys-846 forms a Glycyl lysine isopeptide (Lys-Gly) (interchain with G-Cter in SUMO1); alternate linkage. Residue Lys-846 forms a Glycyl lysine isopeptide (Lys-Gly) (interchain with G-Cter in SUMO2); alternate linkage. A C2H2-type 7 zinc finger spans residues 880-902; the sequence is HCCTRCGKNFSSASALQIHERTH. A Glycyl lysine isopeptide (Lys-Gly) (interchain with G-Cter in SUMO2) cross-link involves residue Lys-906. The C2H2-type 8 zinc-finger motif lies at 908 to 930; it reads FVCNICGRAFTTKGNLKVHYMTH. Residues Lys-942 and Lys-957 each participate in a glycyl lysine isopeptide (Lys-Gly) (interchain with G-Cter in SUMO2) cross-link. Ser-1029 carries the post-translational modification Phosphoserine.

This sequence belongs to the sal C2H2-type zinc-finger protein family. In terms of assembly, interacts with POU5F1/OCT4. Interacts with NANOG. Interacts with BEND3. Interacts with NSD2 (via PHD-type zinc fingers 1, 2 and 3). Interacts with NRBP1. Sumoylation with both SUMO1 and SUMO2 regulates the stability, subcellular localization, transcriptional activity, and may reduce interaction with POU5F1/OCT4.

The protein localises to the cytoplasm. It localises to the nucleus. Functionally, transcription factor with a key role in the maintenance and self-renewal of embryonic and hematopoietic stem cells. This Mus musculus (Mouse) protein is Sal-like protein 4 (Sall4).